A 180-amino-acid polypeptide reads, in one-letter code: Calcineurin subunit B type 1 (180 aa).

A lipid anchor (N-myristoyl glycine) is attached at Gly-2. EF-hand domains are found at residues 25–60, 62–92, 94–129, and 135–170; these read AELK…ALNP, LERV…LSHK, TKED…MVGT, and QLQQ…QEGI. Ca(2+)-binding residues include Asp-38, Asp-40, Ser-42, Thr-44, Glu-49, Asp-70, Asn-72, Asp-74, Glu-76, Glu-81, Asp-107, Asp-109, Asp-111, and Glu-118. The tract at residues 138–143 is canA/calcineurin A binding; the sequence is QIVDKT. The Ca(2+) site is built by Asp-148, Asp-150, Asp-152, Lys-154, and Glu-159.

Belongs to the calcineurin regulatory subunit family. Forms a complex composed of a calmodulin-dependent catalytic subunit canA (also known as calcineurin A) and a regulatory Ca(2+)-binding subunit cnbA (also known as calcineurin B).

Functionally, regulatory subunit of calcineurin, a calcium-dependent, calmodulin stimulated protein phosphatase. Confers calcium sensitivity. Important for stalk formation. The polypeptide is Calcineurin subunit B type 1 (cnbA) (Dictyostelium discoideum (Social amoeba)).